A 349-amino-acid polypeptide reads, in one-letter code: GATA zinc finger domain-containing protein 24 (349 aa).

2 stretches are compositionally biased toward low complexity: residues asparagine 95–asparagine 169 and asparagine 177–serine 195. Disordered stretches follow at residues asparagine 95 to lysine 227 and aspartate 250 to glutamine 294. A compositionally biased stretch (basic and acidic residues) spans glutamate 196 to asparagine 212. Residues serine 257 to serine 272 show a composition bias toward low complexity. Residues lysine 278–lysine 289 are compositionally biased toward basic residues. The GATA-type zinc finger occupies cysteine 295–cysteine 323.

This is GATA zinc finger domain-containing protein 24 (gtaX) from Dictyostelium discoideum (Social amoeba).